The primary structure comprises 300 residues: Acetylglutamate kinase (300 aa).

Substrate-binding positions include 68–69 (GG), Arg90, and Asn194.

It belongs to the acetylglutamate kinase family. ArgB subfamily.

It localises to the cytoplasm. It catalyses the reaction N-acetyl-L-glutamate + ATP = N-acetyl-L-glutamyl 5-phosphate + ADP. It participates in amino-acid biosynthesis; L-arginine biosynthesis; N(2)-acetyl-L-ornithine from L-glutamate: step 2/4. Its function is as follows. Catalyzes the ATP-dependent phosphorylation of N-acetyl-L-glutamate. This is Acetylglutamate kinase from Methanocella arvoryzae (strain DSM 22066 / NBRC 105507 / MRE50).